A 242-amino-acid polypeptide reads, in one-letter code: Terpene cyclase cle7 (242 aa).

7 helical membrane passes run 20-40 (LLLT…ITTI), 50-69 (GVSL…FAIL), 79-101 (VILR…FARS), 117-137 (LFVL…SVLL), 143-163 (FYWS…GILV), 172-192 (SYGM…SLFL), and 207-227 (ILMR…GVCF).

The protein belongs to the paxB family.

It localises to the membrane. It participates in secondary metabolite biosynthesis; terpenoid biosynthesis. In terms of biological role, non-reducing polyketide synthase; part of the cluster A that mediates the biosynthesis of chevalone E and its oxidized derivatives that possess a unique five-membered lactone ring and can synergistically enhance the cytotoxicity of doxorubicin (DOX) in breast cancer cells. Within the pathway, cle7 takes part to the biosynthesis of the molecular scaffold by catalyzing the cyclization of the prenyl group initiated by protonation and ring-opening of the epoxide to produce the chevalone E intermediate. The molecular scaffold is commonly biosynthesized by a series of enzymes including the non-reducing polyketide synthase (NR-PKS) cle1 that produces the alpha-pyrone triacetic acid lactone (TAL); The membrane-bound prenyltransferase cle5 that accepts TAL as its substrate to perform a C-3 geranylgeranylation reaction, in which the pathway-dedicated GGPS cle6 is required to provide GGPP, the other substrate of cle5; the FAD-dependent monooxygenase Cle3 that forms an (S)-epoxide ring at the terminal olefin of the geranylgeranyl group; and the terpene cyclase Cle7 that catalyzes the cyclization of the prenyl group that yields the pentacyclic pathway intermediate chevalone E. Chevalone E can derivatize into seven new oxidized analogs by the cytochrome P450 monooxygenases cle2 (acting at C-20) and cle4 (acting at C-11 and C-12). The sequence is that of Terpene cyclase cle7 from Aspergillus versicolor.